A 246-amino-acid chain; its full sequence is Thaumatin-like protein 1 (246 aa).

The signal sequence occupies residues 1-24 (MMKSQAALLGLTTLAILFFSGAHA). 8 disulfides stabilise this stretch: Cys33–Cys245, Cys81–Cys91, Cys96–Cys103, Cys151–Cys234, Cys156–Cys217, Cys164–Cys180, Cys184–Cys193, and Cys194–Cys204.

Belongs to the thaumatin family. In terms of tissue distribution, equally expressed in the abscission zone and surrounding tissues of both fruitlets and leaves.

It localises to the secreted. In terms of biological role, may be involved in protecting plant tissues from pathogen infection. This is Thaumatin-like protein 1 from Prunus persica (Peach).